The following is a 483-amino-acid chain: Probable cytochrome P450 517A1 (483 aa).

The helical transmembrane segment at 1–21 threads the bilayer; sequence MEIINVFLFLIILFLVKDFVK. Cysteine 429 provides a ligand contact to heme.

This sequence belongs to the cytochrome P450 family. Requires heme as cofactor.

The protein localises to the membrane. This is Probable cytochrome P450 517A1 (cyp517A1) from Dictyostelium discoideum (Social amoeba).